The following is a 218-amino-acid chain: Thiopurine S-methyltransferase (218 aa).

Residues Trp-10, Leu-45, Glu-66, and Arg-123 each contribute to the S-adenosyl-L-methionine site.

It belongs to the class I-like SAM-binding methyltransferase superfamily. TPMT family.

Its subcellular location is the cytoplasm. The catalysed reaction is S-adenosyl-L-methionine + a thiopurine = S-adenosyl-L-homocysteine + a thiopurine S-methylether.. In Pseudomonas aeruginosa (strain UCBPP-PA14), this protein is Thiopurine S-methyltransferase.